Here is a 134-residue protein sequence, read N- to C-terminus: Small ribosomal subunit protein uS11 (134 aa).

This sequence belongs to the universal ribosomal protein uS11 family. In terms of assembly, part of the 30S ribosomal subunit. Interacts with proteins S7 and S18. Binds to IF-3.

Functionally, located on the platform of the 30S subunit, it bridges several disparate RNA helices of the 16S rRNA. Forms part of the Shine-Dalgarno cleft in the 70S ribosome. The sequence is that of Small ribosomal subunit protein uS11 from Albidiferax ferrireducens (strain ATCC BAA-621 / DSM 15236 / T118) (Rhodoferax ferrireducens).